An 807-amino-acid polypeptide reads, in one-letter code: Glycerol-3-phosphate acyltransferase (807 aa).

Residues 308–313 (CHRSHM) carry the HXXXXD motif motif.

This sequence belongs to the GPAT/DAPAT family.

The protein resides in the cell inner membrane. The catalysed reaction is sn-glycerol 3-phosphate + an acyl-CoA = a 1-acyl-sn-glycero-3-phosphate + CoA. It functions in the pathway phospholipid metabolism; CDP-diacylglycerol biosynthesis; CDP-diacylglycerol from sn-glycerol 3-phosphate: step 1/3. The sequence is that of Glycerol-3-phosphate acyltransferase from Shewanella loihica (strain ATCC BAA-1088 / PV-4).